We begin with the raw amino-acid sequence, 632 residues long: Coiled-coil domain-containing protein 22 (632 aa).

4 coiled-coil regions span residues Ser-243 to Leu-269, Lys-326 to Ile-367, Asp-400 to Thr-540, and Thr-584 to Arg-628.

It belongs to the CCDC22 family.

The protein localises to the endosome. Its subcellular location is the cytoplasm. It localises to the cytoskeleton. It is found in the microtubule organizing center. The protein resides in the centrosome. May be involved in regulation of NF-kappa-B signaling. May be involved in copper-dependent atp7a trafficking between the trans-Golgi network and vesicles in the cell periphery. The polypeptide is Coiled-coil domain-containing protein 22 (ccdc22) (Xenopus laevis (African clawed frog)).